Consider the following 171-residue polypeptide: 3-hydroxydecanoyl-[acyl-carrier-protein] dehydratase (171 aa).

H70 is a catalytic residue.

The protein belongs to the thioester dehydratase family. FabA subfamily. In terms of assembly, homodimer.

It is found in the cytoplasm. The enzyme catalyses a (3R)-hydroxyacyl-[ACP] = a (2E)-enoyl-[ACP] + H2O. It carries out the reaction (3R)-hydroxydecanoyl-[ACP] = (2E)-decenoyl-[ACP] + H2O. It catalyses the reaction (2E)-decenoyl-[ACP] = (3Z)-decenoyl-[ACP]. The protein operates within lipid metabolism; fatty acid biosynthesis. Its function is as follows. Necessary for the introduction of cis unsaturation into fatty acids. Catalyzes the dehydration of (3R)-3-hydroxydecanoyl-ACP to E-(2)-decenoyl-ACP and then its isomerization to Z-(3)-decenoyl-ACP. Can catalyze the dehydratase reaction for beta-hydroxyacyl-ACPs with saturated chain lengths up to 16:0, being most active on intermediate chain length. The protein is 3-hydroxydecanoyl-[acyl-carrier-protein] dehydratase of Shewanella denitrificans (strain OS217 / ATCC BAA-1090 / DSM 15013).